The following is a 111-amino-acid chain: MIGVILVLASLLSVGGQLCQKQATRPLTVGGRRRHLMLWLGLALICMGAAMVLWLLVLQTLPVGIAYPMLSLNFVWVTLAAWKIWHEQVPPRHWFGVALIISGIIILGSAA.

Transmembrane regions (helical) follow at residues 38–58 (LWLG…LLVL), 61–81 (LPVG…TLAA), and 91–111 (PRHW…GSAA). The 70-residue stretch at 40-109 (LGLALICMGA…IISGIIILGS (70 aa)) folds into the EamA domain.

The protein belongs to the ArnE family. Heterodimer of ArnE and ArnF.

It localises to the cell inner membrane. Its pathway is bacterial outer membrane biogenesis; lipopolysaccharide biosynthesis. Functionally, translocates 4-amino-4-deoxy-L-arabinose-phosphoundecaprenol (alpha-L-Ara4N-phosphoundecaprenol) from the cytoplasmic to the periplasmic side of the inner membrane. This chain is Probable 4-amino-4-deoxy-L-arabinose-phosphoundecaprenol flippase subunit ArnE, found in Salmonella enteritidis PT4 (strain P125109).